The primary structure comprises 164 residues: ATP synthase subunit b (164 aa).

The chain crosses the membrane as a helical span at residues 10-32 (AVAFVLFFVLFGKKLWTPLAAAL).

The protein belongs to the ATPase B chain family. F-type ATPases have 2 components, F(1) - the catalytic core - and F(0) - the membrane proton channel. F(1) has five subunits: alpha(3), beta(3), gamma(1), delta(1), epsilon(1). F(0) has three main subunits: a(1), b(2) and c(10-14). The alpha and beta chains form an alternating ring which encloses part of the gamma chain. F(1) is attached to F(0) by a central stalk formed by the gamma and epsilon chains, while a peripheral stalk is formed by the delta and b chains.

It is found in the cell inner membrane. Its function is as follows. F(1)F(0) ATP synthase produces ATP from ADP in the presence of a proton or sodium gradient. F-type ATPases consist of two structural domains, F(1) containing the extramembraneous catalytic core and F(0) containing the membrane proton channel, linked together by a central stalk and a peripheral stalk. During catalysis, ATP synthesis in the catalytic domain of F(1) is coupled via a rotary mechanism of the central stalk subunits to proton translocation. Component of the F(0) channel, it forms part of the peripheral stalk, linking F(1) to F(0). The polypeptide is ATP synthase subunit b (Gluconacetobacter diazotrophicus (strain ATCC 49037 / DSM 5601 / CCUG 37298 / CIP 103539 / LMG 7603 / PAl5)).